The chain runs to 80 residues: Exodeoxyribonuclease 7 small subunit (80 aa).

It belongs to the XseB family. In terms of assembly, heterooligomer composed of large and small subunits.

The protein localises to the cytoplasm. The catalysed reaction is Exonucleolytic cleavage in either 5'- to 3'- or 3'- to 5'-direction to yield nucleoside 5'-phosphates.. Bidirectionally degrades single-stranded DNA into large acid-insoluble oligonucleotides, which are then degraded further into small acid-soluble oligonucleotides. This Caulobacter sp. (strain K31) protein is Exodeoxyribonuclease 7 small subunit.